A 61-amino-acid chain; its full sequence is UPF0434 protein Sama_1339 (61 aa).

It belongs to the UPF0434 family.

This chain is UPF0434 protein Sama_1339, found in Shewanella amazonensis (strain ATCC BAA-1098 / SB2B).